An 889-amino-acid polypeptide reads, in one-letter code: Potassium/sodium hyperpolarization-activated cyclic nucleotide-gated channel 2 (889 aa).

The segment covering 1–10 (MDARGGGGRP) has biased composition (gly residues). Residues 1–159 (MDARGGGGRP…GPAGEPRGSQ (159 aa)) are disordered. The Cytoplasmic portion of the chain corresponds to 1 to 215 (MDARGGGGRP…PYSDFRFYWD (215 aa)). A compositionally biased stretch (pro residues) spans 17-55 (TPAPGPPPPPPPAPPQQQPPPPPPPAPPPGPGPAPPQHP). Positions 129 to 155 (GAASGPAPGPGPAEEAGSEEAGPAGEP) are enriched in low complexity. Phosphoserine occurs at positions 146 and 161. Positions 158–209 (SQASFMQRQFGALLQPGVNKFSLRMFGSQKAVEREQERVKSAGAWIIHPYSD) are involved in subunit assembly. The helical transmembrane segment at 216-236 (FTMLLFMVGNLIIIPVGITFF) threads the bilayer. The Extracellular portion of the chain corresponds to 237 to 240 (KDET). Residues 241–261 (TAPWIVFNVVSDTFFLMDLVL) form a helical membrane-spanning segment. Residues 262-288 (NFRTGIVIEDNTEIILDPEKIKKKYLR) are Cytoplasmic-facing. The helical transmembrane segment at 289 to 309 (TWFVVDFVSSIPVDYIFLIVE) threads the bilayer. The Extracellular portion of the chain corresponds to 310 to 317 (KGIDSEVY). A helical; Voltage-sensor membrane pass occupies residues 318–338 (KTARALRIVRFTKILSLLRLL). Topologically, residues 339-369 (RLSRLIRYIHQWEEIFHMTYDLASAVMRICN) are cytoplasmic. A helical membrane pass occupies residues 370 to 390 (LISMMLLLCHWDGCLQFLVPM). The Extracellular portion of the chain corresponds to 391–413 (LQDFPRNCWVSINGMVNHSWSEL). The N-linked (GlcNAc...) asparagine glycan is linked to N407. The segment at residues 414–435 (YSFALFKAMSHMLCIGYGRQAP) is an intramembrane region (pore-forming). At 436 to 440 (ESMTD) the chain is on the extracellular side. The helical transmembrane segment at 441–461 (IWLTMLSMIVGATCYAMFIGH) threads the bilayer. At 462–889 (ATALIQSLDS…SARSRLSSNL (428 aa)) the chain is on the cytoplasmic side. 8 residues coordinate 3',5'-cyclic AMP: M599, G608, E609, I610, C611, R618, T619, and R659. S668 carries the post-translational modification Phosphoserine; by PKG/PRKG2. At S754 the chain carries Phosphoserine. Residues 754–889 (SPRLVRRPPP…SARSRLSSNL (136 aa)) are disordered. Omega-N-methylarginine is present on R756. A compositionally biased stretch (pro residues) spans 760-784 (RPPPGPAPAAASPGPPPPASPPGAP). 5 positions are modified to phosphoserine: S771, S779, S786, S866, and S868. Positions 785–860 (ASPRAPRTSP…TPAARAAAPS (76 aa)) are enriched in low complexity.

This sequence belongs to the potassium channel HCN family. In terms of assembly, homotetramer. The channel is composed of a homo- or heterotetrameric complex of pore-forming subunits. Heterotetramer with HCN1. Forms an obligate 4:4 complex with accessory subunit PEX5L. Interacts with KCNE2. Phosphorylation at Ser-668 by PRKG2 shifts the voltage-dependence to more negative voltages, hence counteracting the stimulatory effect of cGMP on gating. Post-translationally, S-palmitoylated. In terms of processing, N-glycosylated; required for cell surface trafficking of HCN2. In terms of tissue distribution, highly expressed throughout the brain. Detected at low levels in heart.

The protein resides in the cell membrane. The catalysed reaction is Na(+)(in) = Na(+)(out). The enzyme catalyses K(+)(in) = K(+)(out). It carries out the reaction NH4(+)(in) = NH4(+)(out). Activated by cAMP, and at 10-100 times higher concentrations, also by cGMP. cAMP binding causes a conformation change that leads to the assembly of an active tetramer and channel opening. Binding of cAMP removes a tonic inhibition conferred by cyclic nucleotide-binding domain (CNBD) on channel opening. Channel activity is modulated by intracellular chloride ions and pH; acidic pH shifts the activation to more negative voltages. Inhibited by extracellular cesium ions. In terms of biological role, hyperpolarization-activated ion channel that is permeable to sodium and potassium ions. Displays lower selectivity for K(+) over Na(+) ions. Contributes to the native pacemaker currents in heart (If) and in neurons (Ih). Can also transport ammonium in the distal nephron. Involved in the initiation of neuropathic pain in sensory neurons. This is Potassium/sodium hyperpolarization-activated cyclic nucleotide-gated channel 2 from Homo sapiens (Human).